Consider the following 108-residue polypeptide: UPF0060 membrane protein YnfA (108 aa).

The Periplasmic portion of the chain corresponds to 1 to 5 (MFKTT). The helical transmembrane segment at 6-26 (LLFFITALCEIIGCFLPWLWL) threads the bilayer. The Cytoplasmic segment spans residues 27–30 (KRNG). Residues 31–51 (SIWLLLPAGVSLAFFVWLLTL) form a helical membrane-spanning segment. Residues 52–60 (HPAASGRVY) are Periplasmic-facing. A helical transmembrane segment spans residues 61–81 (AAYGGVYVCTALLWLRFIDGV). Over 82–84 (KLS) the chain is Cytoplasmic. Residues 85–105 (LYDWSGALIALCGMLIIVAGW) traverse the membrane as a helical segment. Over 106 to 108 (GRA) the chain is Periplasmic.

The protein belongs to the UPF0060 family.

The protein localises to the cell inner membrane. The protein is UPF0060 membrane protein YnfA of Escherichia fergusonii (strain ATCC 35469 / DSM 13698 / CCUG 18766 / IAM 14443 / JCM 21226 / LMG 7866 / NBRC 102419 / NCTC 12128 / CDC 0568-73).